Reading from the N-terminus, the 139-residue chain is Natriuretic peptide Mf-NP (139 aa).

The first 25 residues, 1–25 (MVGLSRLTGGGLLLVLALLPLALDG), serve as a signal peptide directing secretion. A propeptide spanning residues 26 to 75 (KPLEEAPTAPSRIIPFSRPVRKESQAVLDPMVHPERPAGSGDDGDLSRLE) is cleaved from the precursor. An intrachain disulfide couples C86 to C102. Residues 117-139 (IIPFSRPVRKESRAALDRMQHPG) constitute a propeptide that is removed on maturation.

It belongs to the natriuretic peptide family. As to expression, expressed by the venom gland.

Its subcellular location is the secreted. Its function is as follows. Natriuretic peptide that dose-dependently induces the rapid relaxation of rat aortic strips phenylephrine-precontracted. Acts by stimulating cGMP production in a dose-dependent manner (by probably activating NPR1 and/or NPR2). May also show potent hypotensive effects. The chain is Natriuretic peptide Mf-NP from Micrurus fulvius (Eastern coral snake).